The primary structure comprises 1072 residues: Carbamoyl phosphate synthase large chain (1072 aa).

The segment at 1–401 (MPKRLDINTI…SLLKAVRSLE (401 aa)) is carboxyphosphate synthetic domain. Arg-129, Arg-169, Gly-175, Gly-176, Lys-208, Ile-210, Glu-215, Gly-241, Val-242, His-243, Gln-284, and Glu-298 together coordinate ATP. An ATP-grasp 1 domain is found at 133-327 (RTLMQELNEP…IAKLAAKIAV (195 aa)). Gln-284, Glu-298, and Asn-300 together coordinate Mg(2+). Positions 284, 298, and 300 each coordinate Mn(2+). The oligomerization domain stretch occupies residues 402–546 (LGIYHLELDH…YSTYADENEL (145 aa)). The segment at 547-929 (IVTDRKSVVV…ALYKGLVASG (383 aa)) is carbamoyl phosphate synthetic domain. Positions 671 to 861 (EAALTKLGIP…MANVATKVIL (191 aa)) constitute an ATP-grasp 2 domain. ATP is bound by residues Arg-707, Arg-746, Glu-752, Gly-777, Val-778, His-779, Ser-780, Gln-820, and Glu-832. Mg(2+) is bound by residues Gln-820, Glu-832, and Asn-834. Mn(2+)-binding residues include Gln-820, Glu-832, and Asn-834. The MGS-like domain maps to 930–1072 (INIPTHGSVI…QTKRHEVVHA (143 aa)). The interval 930–1072 (INIPTHGSVI…QTKRHEVVHA (143 aa)) is allosteric domain.

It belongs to the CarB family. As to quaternary structure, composed of two chains; the small (or glutamine) chain promotes the hydrolysis of glutamine to ammonia, which is used by the large (or ammonia) chain to synthesize carbamoyl phosphate. Tetramer of heterodimers (alpha,beta)4. The cofactor is Mg(2+). Mn(2+) is required as a cofactor.

It carries out the reaction hydrogencarbonate + L-glutamine + 2 ATP + H2O = carbamoyl phosphate + L-glutamate + 2 ADP + phosphate + 2 H(+). The catalysed reaction is hydrogencarbonate + NH4(+) + 2 ATP = carbamoyl phosphate + 2 ADP + phosphate + 2 H(+). The protein operates within amino-acid biosynthesis; L-arginine biosynthesis; carbamoyl phosphate from bicarbonate: step 1/1. It participates in pyrimidine metabolism; UMP biosynthesis via de novo pathway; (S)-dihydroorotate from bicarbonate: step 1/3. Its function is as follows. Large subunit of the glutamine-dependent carbamoyl phosphate synthetase (CPSase). CPSase catalyzes the formation of carbamoyl phosphate from the ammonia moiety of glutamine, carbonate, and phosphate donated by ATP, constituting the first step of 2 biosynthetic pathways, one leading to arginine and/or urea and the other to pyrimidine nucleotides. The large subunit (synthetase) binds the substrates ammonia (free or transferred from glutamine from the small subunit), hydrogencarbonate and ATP and carries out an ATP-coupled ligase reaction, activating hydrogencarbonate by forming carboxy phosphate which reacts with ammonia to form carbamoyl phosphate. This is Carbamoyl phosphate synthase large chain from Bacillus anthracis (strain A0248).